Consider the following 297-residue polypeptide: Phosphoribosylaminoimidazole-succinocarboxamide synthase (297 aa).

Belongs to the SAICAR synthetase family.

The enzyme catalyses 5-amino-1-(5-phospho-D-ribosyl)imidazole-4-carboxylate + L-aspartate + ATP = (2S)-2-[5-amino-1-(5-phospho-beta-D-ribosyl)imidazole-4-carboxamido]succinate + ADP + phosphate + 2 H(+). Its pathway is purine metabolism; IMP biosynthesis via de novo pathway; 5-amino-1-(5-phospho-D-ribosyl)imidazole-4-carboxamide from 5-amino-1-(5-phospho-D-ribosyl)imidazole-4-carboxylate: step 1/2. In Methylococcus capsulatus (strain ATCC 33009 / NCIMB 11132 / Bath), this protein is Phosphoribosylaminoimidazole-succinocarboxamide synthase.